The sequence spans 196 residues: Thymidylate kinase (196 aa).

G7–T14 serves as a coordination point for ATP.

The protein belongs to the thymidylate kinase family.

It catalyses the reaction dTMP + ATP = dTDP + ADP. Its function is as follows. Phosphorylation of dTMP to form dTDP in both de novo and salvage pathways of dTTP synthesis. This Wolbachia pipientis wMel protein is Thymidylate kinase.